The chain runs to 155 residues: Protein FAM162B (155 aa).

Residues 95–114 (VKACYIMMGLTIFACLVMIV) traverse the membrane as a helical segment.

It belongs to the UPF0389 family.

The protein resides in the membrane. The chain is Protein FAM162B (fam162b) from Danio rerio (Zebrafish).